A 554-amino-acid chain; its full sequence is Beta-eudesmol synthase (554 aa).

The Mg(2+) site is built by aspartate 305, aspartate 309, and glutamate 456. The short motif at 305–309 (DDIYD) is the DDXXD motif element.

This sequence belongs to the terpene synthase family. It depends on Mg(2+) as a cofactor. Mn(2+) serves as cofactor. In terms of tissue distribution, expressed in rhizomes. Detected in stems, but not in leaves.

The protein localises to the cytoplasm. The catalysed reaction is (2E,6E)-farnesyl diphosphate + H2O = beta-eudesmol + diphosphate. It catalyses the reaction (2E,6E)-farnesyl diphosphate + H2O = 10-epi-gamma-eudesmol + diphosphate. It carries out the reaction (2E,6E)-farnesyl diphosphate + H2O = alpha-eudesmol + diphosphate. It participates in secondary metabolite biosynthesis; terpenoid biosynthesis. Involved in the biosynthesis of beta-eudesmol, a sesquiterpene with antifungal activity and responsible for resistance of plants to ant attack. Produces mainly beta-eudesmol, but also smaller amounts of 10-epi-gamma-eudesmol, alpha-eudesmol and aristolene. The polypeptide is Beta-eudesmol synthase (ZSS2) (Zingiber zerumbet (Shampoo ginger)).